The primary structure comprises 691 residues: Germ cell nuclear acidic protein (691 aa).

Residues 22–25 carry the SUMO interaction motif 1 (SIM) motif; the sequence is ILNV. Residues 25–488 are disordered; the sequence is VQSSSDDTSG…GAAKVEKRKT (464 aa). Residues 27–36 are compositionally biased toward low complexity; that stretch reads SSSDDTSGSS. Residues 48 to 63 are compositionally biased toward polar residues; that stretch reads CILNVQSRSGDTSGSS. 3 short sequence motifs (SUMO interaction motif 1 (SIM)) span residues 76–79, 97–100, and 121–124; these read VVVI, LLEI, and IVIS. Basic and acidic residues predominate over residues 86–97; sequence ECHTHEEKKAKL. Acidic residues predominate over residues 124 to 333; it reads SDDDNDDDNG…VPDDNSDDLE (210 aa). Residues 467-488 are compositionally biased toward basic residues; that stretch reads GHKKRGPSKKKPGAAKVEKRKT. The SprT-like domain maps to 522–677; the sequence is VQRIYDLFNR…AKCKGSLVMV (156 aa).

Belongs to the serine-aspartate repeat-containing protein (SDr) family. As to quaternary structure, interacts (via SIM domains) with SUMO2; this interaction allows the GCNA recruitment to DPCs sites. Interacts with TOP2A; this interaction allows the resolution of topoisomerase II (TOP2A) DNA-protein cross-links. In terms of tissue distribution, expressed in germ cells of the testis (at protein level). Detected in skeletal muscle, liver, kidney, pancreas, heart, lung and brain. Expressed throughout spermatogenesis, from spermatogonia to elongated spermatids, in normal adult testis (at protein level).

It is found in the nucleus. The protein localises to the PML body. It localises to the chromosome. May play a role in DNA-protein cross-links (DPCs) clearance through a SUMO-dependent recruitment to sites of DPCs, ensuring the genomic stability by protecting germ cells and early embryos from various sources of damage. Can resolve the topoisomerase II (TOP2A) DPCs. The chain is Germ cell nuclear acidic protein from Homo sapiens (Human).